The chain runs to 835 residues: MSPNTGESNAAVYASSTQLARALYGGDLVSWIKHTHPGISLELQLDVPVKLIKPGMSQTRPVTVVRAPMGSGKTTALLEWLQHALKADISVLVVSCRRSFTQTLIQRFNDAGLSGFVTYLTSETYIMGFKRLIVQLESLHRVSSEAIDSYDVLILDEVMSVIGQLYSPTMRRLSAVDSLLYRLLNRCSQIIAMDATVNSQFIDLISGLRGDENIHTIVCTYAGVGFSGRTCTILRDMGIDTLVRVIKRSPEHEDVRTIHQLRGTFFDELALRLQCGHNICIFSSTLSFSELVAQFCAIFTDSILILNSTRPLCNVNEWKHFRVLVYTTVVTVGLSFDMAHFHSMFAYIKPMSYGPDMVSVYQSLGRVRLLLLNEVLMYVDGSRTRCGPLFSPMLLNFTIANKFQWFPTHTQITNKLCCAFRQRCANAFTRSNTHLFSRFKYKHLFERCSLWSLADSINILQTLLASNQILVVLDGMGPITDVSPVQFCAFIHDLRHSANAVASCMRSLRQDNDSCLTDFGPSGFMADNITAFMEKYLMESINTEEQIKVFKALACPIEQPRLVNTAILGACIRIPEALEAFDVFQKIYTHYASGWFPVLDKTGEFSIATITTAPNLTTHWELFRRCAYIAKTLKWNPSTEGCVTQVLDTDINTLFNQHGDSLAQLIFEVMRCNVTDAKIILNRPVWRTTGFLDGCHNQCFRPIPTKHEYNIALFRLIWEQLFGARVTKSTQTFPGSTRVKNLKKKDLETLLDSINVDRSACRTYRQLYNLLMSHRHSFSQQRYKITAPAWARHVYFQAHQMHLAPHAEAMLQLALSELSPGSWPRINGAVNFESL.

The Helicase ATP-binding domain occupies 54–215; that stretch reads PGMSQTRPVT…SGLRGDENIH (162 aa). 67-74 is a binding site for ATP; it reads APMGSGKT.

Belongs to the herpesviridae OriBP family. Homodimer. Interacts with the major DNA-binding protein. Interacts with the helicase/primase component 52 and the polymerase accessory protein.

It localises to the host nucleus. Functions as a docking protein to recruit essential components of the viral replication machinery to viral DNA origins. In the presence of the major DNA-binding protein, opens dsDNA leading to a conformational change in the origin that facilitates DNA unwinding and subsequent replication. This is Replication origin-binding protein from Varicella-zoster virus (strain Oka vaccine) (HHV-3).